The chain runs to 114 residues: uncharacterized protein (114 aa).

The span at 1 to 20 shows a compositional bias: basic and acidic residues; that stretch reads MGLSRWHDKNSRPAEEKSEE. Residues 1 to 22 form a disordered region; sequence MGLSRWHDKNSRPAEEKSEEMQ.

May be involved in phosphatase regulation and/or generation of precursor metabolites and energy. This is an uncharacterized protein from Saccharomyces cerevisiae (strain ATCC 204508 / S288c) (Baker's yeast).